A 227-amino-acid polypeptide reads, in one-letter code: Cytochrome c oxidase subunit 2 (227 aa).

At 1 to 14 the chain is on the mitochondrial intermembrane side; sequence MAYPFQLGLQDATS. A helical transmembrane segment spans residues 15–45; the sequence is PIMEELTNFHDHTLMIVFLISSLVLYIISLM. Over 46 to 59 the chain is Mitochondrial matrix; the sequence is LTTKLTHTNTMDAQ. Residues 60-87 traverse the membrane as a helical segment; that stretch reads EVETIWTILPAVILILIALPSLRILYMM. The Mitochondrial intermembrane portion of the chain corresponds to 88-227; the sequence is DEINNPALTV…HFENWSASMI (140 aa). Positions 161, 196, 198, 200, 204, and 207 each coordinate Cu cation. E198 is a Mg(2+) binding site.

It belongs to the cytochrome c oxidase subunit 2 family. As to quaternary structure, component of the cytochrome c oxidase (complex IV, CIV), a multisubunit enzyme composed of 14 subunits. The complex is composed of a catalytic core of 3 subunits MT-CO1, MT-CO2 and MT-CO3, encoded in the mitochondrial DNA, and 11 supernumerary subunits COX4I, COX5A, COX5B, COX6A, COX6B, COX6C, COX7A, COX7B, COX7C, COX8 and NDUFA4, which are encoded in the nuclear genome. The complex exists as a monomer or a dimer and forms supercomplexes (SCs) in the inner mitochondrial membrane with NADH-ubiquinone oxidoreductase (complex I, CI) and ubiquinol-cytochrome c oxidoreductase (cytochrome b-c1 complex, complex III, CIII), resulting in different assemblies (supercomplex SCI(1)III(2)IV(1) and megacomplex MCI(2)III(2)IV(2)). Found in a complex with TMEM177, COA6, COX18, COX20, SCO1 and SCO2. Interacts with TMEM177 in a COX20-dependent manner. Interacts with COX20. Interacts with COX16. It depends on Cu cation as a cofactor.

It is found in the mitochondrion inner membrane. The enzyme catalyses 4 Fe(II)-[cytochrome c] + O2 + 8 H(+)(in) = 4 Fe(III)-[cytochrome c] + 2 H2O + 4 H(+)(out). In terms of biological role, component of the cytochrome c oxidase, the last enzyme in the mitochondrial electron transport chain which drives oxidative phosphorylation. The respiratory chain contains 3 multisubunit complexes succinate dehydrogenase (complex II, CII), ubiquinol-cytochrome c oxidoreductase (cytochrome b-c1 complex, complex III, CIII) and cytochrome c oxidase (complex IV, CIV), that cooperate to transfer electrons derived from NADH and succinate to molecular oxygen, creating an electrochemical gradient over the inner membrane that drives transmembrane transport and the ATP synthase. Cytochrome c oxidase is the component of the respiratory chain that catalyzes the reduction of oxygen to water. Electrons originating from reduced cytochrome c in the intermembrane space (IMS) are transferred via the dinuclear copper A center (CU(A)) of subunit 2 and heme A of subunit 1 to the active site in subunit 1, a binuclear center (BNC) formed by heme A3 and copper B (CU(B)). The BNC reduces molecular oxygen to 2 water molecules using 4 electrons from cytochrome c in the IMS and 4 protons from the mitochondrial matrix. This Sundamys muelleri (Mueller's giant sunda rat) protein is Cytochrome c oxidase subunit 2 (MT-CO2).